Here is a 639-residue protein sequence, read N- to C-terminus: Chaperone protein HtpG (639 aa).

The interval 1–348 (MAQYEFQTEV…SEDLPLNVSR (348 aa)) is a; substrate-binding. Residues 349 to 565 (EILQQNRVLA…ENDPTVQMER (217 aa)) are b. A c region spans residues 566-639 (LMRATGQTHK…KRVNRLLARG (74 aa)).

Belongs to the heat shock protein 90 family. In terms of assembly, homodimer.

It is found in the cytoplasm. In terms of biological role, molecular chaperone. Has ATPase activity. The polypeptide is Chaperone protein HtpG (Treponema pallidum (strain Nichols)).